Here is a 171-residue protein sequence, read N- to C-terminus: Neudesin (171 aa).

Positions 1-30 are cleaved as a signal peptide; that stretch reads MARPAPWWRLRLLAALVLALALVPVPSAWA. The Cytochrome b5 heme-binding domain occupies 43-128; that stretch reads VRLFTEEELA…KELEALDDVF (86 aa). The residue at position 135 (K135) is an N6-acetyllysine.

This sequence belongs to the cytochrome b5 family. MAPR subfamily. In terms of assembly, interacts with PINK1 and PARK7. In terms of tissue distribution, in the embryo, expressed most abundantly in brain and spinal cord. Widely expressed in adult tissues including brain, heart, lung and kidney. In brain, expressed in neurons but not in glial cells. In the hypothalamus is expressed primarily in the paraventricular nucleus (PVN), with lower levels of expression in the arcuate nucleus (ARC).

The protein localises to the secreted. It localises to the extracellular space. It is found in the mitochondrion. Its subcellular location is the endoplasmic reticulum. Its function is as follows. Acts as a neurotrophic factor in postnatal mature neurons, enhancing neuronal survival. Promotes cell proliferation and neurogenesis in undifferentiated neural pro-genitor cells at the embryonic stage and inhibits differentiation of astrocytes. Its neurotrophic activity is exerted via MAPK1/ERK2, MAPK3/ERK1 and AKT1/AKT pathways. Neurotrophic activity is enhanced by binding to heme. Also acts as an anorexigenic neurotrophic factor that contributes to energy balance. In Mus musculus (Mouse), this protein is Neudesin.